We begin with the raw amino-acid sequence, 150 residues long: Histone H2B.2 (150 aa).

The segment covering 1 to 16 (MAPKAEKKPAAKKPAE) has biased composition (basic and acidic residues). The interval 1–57 (MAPKAEKKPAAKKPAEEEPAAEKAPAGKKPKAEKRVPAGKSAGKEGGEGKRGRKKGK) is disordered. An N6-acetyllysine mark is found at Lys7 and Lys34. Lys146 participates in a covalent cross-link: Glycyl lysine isopeptide (Lys-Gly) (interchain with G-Cter in ubiquitin).

This sequence belongs to the histone H2B family. As to quaternary structure, the nucleosome is a histone octamer containing two molecules each of H2A, H2B, H3 and H4 assembled in one H3-H4 heterotetramer and two H2A-H2B heterodimers. The octamer wraps approximately 147 bp of DNA. In terms of processing, can be acetylated to form H2BK6ac and H2BK33ac. Post-translationally, monoubiquitinated to form H2BK143ub1; may give a specific tag for epigenetic transcriptional activation.

It localises to the nucleus. The protein localises to the chromosome. Functionally, core component of nucleosome. Nucleosomes wrap and compact DNA into chromatin, limiting DNA accessibility to the cellular machineries which require DNA as a template. Histones thereby play a central role in transcription regulation, DNA repair, DNA replication and chromosomal stability. DNA accessibility is regulated via a complex set of post-translational modifications of histones, also called histone code, and nucleosome remodeling. The polypeptide is Histone H2B.2 (Zea mays (Maize)).